Consider the following 295-residue polypeptide: Protoheme IX farnesyltransferase (295 aa).

9 consecutive transmembrane segments (helical) span residues 27 to 46 (IMYL…PGSI), 50 to 72 (IAII…NMWY), 93 to 115 (ISKS…VMMI), 119 to 136 (YISG…SFAY), 148 to 168 (IVIG…SVTS), 175 to 195 (LILF…LSLL), 219 to 239 (VHIL…GLFL), 244 to 264 (LYEI…FKVF), and 275 to 295 (MFTY…LASF).

Belongs to the UbiA prenyltransferase family. Protoheme IX farnesyltransferase subfamily.

It is found in the cell inner membrane. The catalysed reaction is heme b + (2E,6E)-farnesyl diphosphate + H2O = Fe(II)-heme o + diphosphate. The protein operates within porphyrin-containing compound metabolism; heme O biosynthesis; heme O from protoheme: step 1/1. Its function is as follows. Converts heme B (protoheme IX) to heme O by substitution of the vinyl group on carbon 2 of heme B porphyrin ring with a hydroxyethyl farnesyl side group. The polypeptide is Protoheme IX farnesyltransferase (Ehrlichia canis (strain Jake)).